Here is a 262-residue protein sequence, read N- to C-terminus: Nodulation protein J (262 aa).

The ABC transmembrane type-2 domain occupies 33 to 259 (ASILGNLAEP…FLSVGLLQRR (227 aa)). 6 consecutive transmembrane segments (helical) span residues 35 to 55 (ILGN…GLGA), 62 to 82 (GIPY…MISA), 125 to 145 (ALLA…ASWP), 147 to 167 (VLFA…LAMI), 177 to 197 (YFIF…GAVF), and 236 to 256 (LHIS…VGLL).

The protein belongs to the ABC-2 integral membrane protein family. Lipooligosaccharide exporter (TC 3.A.1.102) subfamily. In terms of assembly, the complex is composed of two ATP-binding proteins (NodI) and two transmembrane proteins (NodJ).

The protein resides in the cell inner membrane. In terms of biological role, part of the ABC transporter complex NodIJ involved in the export of the nodulation factors (Nod factors), the bacterial signal molecules that induce symbiosis and subsequent nodulation induction. Nod factors are LCO (lipo-chitin oligosaccharide), a modified beta-1,4-linked N-acetylglucosamine oligosaccharide. This subunit encodes the transporter. In Sinorhizobium fredii (strain NBRC 101917 / NGR234), this protein is Nodulation protein J (nodJ).